Here is a 589-residue protein sequence, read N- to C-terminus: Poly(3-hydroxyalkanoate) polymerase subunit PhaC (589 aa).

The disordered stretch occupies residues 1–23 (MATGKGAAASTQEGKSQPFKVTP). The active site involves cysteine 319.

It belongs to the PHA/PHB synthase family. Type I PhaC subfamily. Monomer.

The protein localises to the cytoplasm. The enzyme catalyses (3R)-3-hydroxybutanoyl-CoA + [(3R)-hydroxybutanoate](n) = [(3R)-hydroxybutanoate](n+1) + CoA. It functions in the pathway biopolymer metabolism; poly-(R)-3-hydroxybutanoate biosynthesis. Functionally, polymerizes (R)-3-hydroxybutyryl-CoA to create polyhydroxybutyrate (PHB) which consists of thousands of hydroxybutyrate molecules linked end to end. PHB serves as an intracellular energy reserve material when cells grow under conditions of nutrient limitation. The chain is Poly(3-hydroxyalkanoate) polymerase subunit PhaC from Cupriavidus necator (strain ATCC 17699 / DSM 428 / KCTC 22496 / NCIMB 10442 / H16 / Stanier 337) (Ralstonia eutropha).